A 178-amino-acid polypeptide reads, in one-letter code: Interleukin-10 (178 aa).

The N-terminal stretch at Met1–Ala18 is a signal peptide. Disulfide bonds link Cys30/Cys126 and Cys80/Cys132. N-linked (GlcNAc...) asparagine glycosylation occurs at Asn134.

The protein belongs to the IL-10 family. In terms of assembly, homodimer. Interacts with IL10RA and IL10RB.

Its subcellular location is the secreted. Its function is as follows. Major immune regulatory cytokine that acts on many cells of the immune system where it has profound anti-inflammatory functions, limiting excessive tissue disruption caused by inflammation. Mechanistically, IL10 binds to its heterotetrameric receptor comprising IL10RA and IL10RB leading to JAK1 and STAT2-mediated phosphorylation of STAT3. In turn, STAT3 translocates to the nucleus where it drives expression of anti-inflammatory mediators. Targets antigen-presenting cells (APCs) such as macrophages and monocytes and inhibits their release of pro-inflammatory cytokines including granulocyte-macrophage colony-stimulating factor /GM-CSF, granulocyte colony-stimulating factor/G-CSF, IL-1 alpha, IL-1 beta, IL-6, IL-8 and TNF-alpha. Also interferes with antigen presentation by reducing the expression of MHC-class II and co-stimulatory molecules, thereby inhibiting their ability to induce T cell activation. In addition, controls the inflammatory response of macrophages by reprogramming essential metabolic pathways including mTOR signaling. The protein is Interleukin-10 (IL10) of Macaca fascicularis (Crab-eating macaque).